Here is a 13477-residue protein sequence, read N- to C-terminus: Mucin-3B (13477 aa).

Residues 1-21 (MQLLGLLSILWMLKSSPGATG) form the signal peptide. Low complexity predominate over residues 219-234 (TISSTTRTTERTPLPT). Disordered regions lie at residues 219 to 243 (TISSTTRTTERTPLPTGSIHTTMSP), 327 to 347 (TRSTPTSETTYPASPTSTVTD), 360 to 383 (GTLSPTTTLPPTSSSQQTTETPMT), 513 to 559 (SMTT…PSTL), 622 to 643 (ATTPTTNLGNTTTETTSHSTPS), 815 to 839 (TTTNSFTTSANMEPPSTAVATTGTG), 923 to 968 (TSQT…STTE), 1154 to 1179 (PSMSASNDRTTHTESISSPPASTSTL), 1480 to 1511 (SPTVQNTETSSFVSMTSATTPSERPTFTSTEN), 1529 to 1601 (SISA…FPET), 1619 to 1638 (MTSTPPITSSVTPTNTVTSM), 1692 to 1714 (TTSTPTSETTYSTSPTSTVTDSM), 1944 to 1968 (TTSATMEPPSSSVAATDTGQTTFTS), 2064 to 2123 (TPNA…IAKS), 2170 to 2197 (STSMTPSTVSTSIPTSQPKTVNSSSGGI), 2275 to 2308 (SSSMSESSAGTTHTESISSPPATTSTLHTTAEST), 2442 to 2462 (RSTPTSETTYPTSPTSTVKGS), 2476 to 2497 (LSMETSLPPTSSSLPTTETATT), 2509 to 2537 (SHSTPSFSSSTIHSTVSTPTTVISSGPPT), 2591 to 2610 (SAMSTSDIPSSPSIQNTETS), 2672 to 2717 (TSTL…FSSS), 2812 to 2832 (TTITRSTPTSETTYPISSTST), 2845 to 2867 (TMTETSSSATSLPLTSPLVSTTE), 2922 to 2947 (SRIPSSLSTDIPTSQPTTITPSSVGI), 3074 to 3109 (ETPSSTVATTGTGQTTFTSSTATSPETNTLTPTPDI), 3309 to 3395 (TTSH…NSNS), 3420 to 3481 (ITTT…SHST), 3545 to 3565 (STTSFTSSTATTETTSRSTPS), 3654 to 3727 (SITT…STTA), 3740 to 3812 (ITTI…TTAE), 4014 to 4047 (TETTSRSTPSYTSAITTTETTSHRTPSFTSSIAT), 4067 to 4106 (TSNSTASLTSSMTTTETTSHSTPSLTSSMTATETTSHSTP), 4182 to 4249 (TTET…SSIT), 4269 to 4313 (NSTS…PSFT), 4510 to 4530 (SHSTPSFNSSITTTETLSHST), 4557 to 4617 (TETT…STSS), 4630 to 4651 (YSPSSFTSSITTTESPSHSTPS), 4802 to 4830 (TSSFTSSITSTETTSHSTPSLTSSITATG), 4953 to 4986 (HSLPSFTSSSTTTETPSHSPPGFSSSIATSKTIS), 5128 to 5203 (YTSS…ITTT), 5455 to 5486 (ITNTESTSRSTPSFTFSTTSTETTSHSTPSFT), 5627 to 5680 (TTKT…ATSK), 5834 to 5908 (TTSY…HSPP), 5957 to 5977 (STPSFTSSITTTETTSQSSPS), 5990 to 6017 (HSTASFTSSITTTETTSHSTRSITSSIT), 6030 to 6080 (TSSI…PPIF), 6120 to 6150 (TTETNSHSPPSFTSSIATTETPSHSPPSFTS), 6172 to 6197 (TESTSHSTPSFTSSIATTETTSHTPP), 6456 to 6481 (TETPSHSTPSFPSSITTTQSASHSTP), 6541 to 6598 (TKTT…TSTS), 6846 to 6867 (TTGTSSHNTLGLSSSVDTTKTT), 6946 to 6971 (ITTTETTSHSTPSITSSVTTAERTSH), 6999 to 7021 (TTESTSHSNPSLTSAITTTETRS), 7067 to 7093 (TTETTSHSPPSFTSSISITETPSHSPP), 7170 to 7206 (TETASHSNPSSTSSITTTESTSHSPPRSTSAIATTGI), 7225 to 7244 (SHSTASFTSSITSTETISHS), 7299 to 7329 (FTSSITTTESTSQSTPSFTFSTTSTETTSHS), 7400 to 7433 (SYTSSITTTETPSHSSPSFPSTITSTETISHRTP), 7476 to 7532 (TETI…TTST), 7578 to 7600 (TGTSSHSTLGLSSSVTTTKTTSH), 7731 to 7766 (TEITSHSPPSFTSSSTTTETPSHSTPGFSSSIATSK), 7922 to 7996 (SHST…PPIF), 8036 to 8066 (TTETNSHSPPSFTSSIATTETPSHSPPSFTS), 8088 to 8113 (TESTSHSTPSFTSSIATTETTSHTPP), 8372 to 8397 (TETPSHSTPSFPSSITTTQSASHSTP), 8457 to 8514 (TKTT…TSTS), 8762 to 8783 (TTGTSSHNTLGLSSSVDTTKTT), 8862 to 8887 (ITTTETTSHSTPSITSSVTTAERTSH), 8915 to 8941 (TTESTSHSNPSLTSAITTTETRSHSPP), 8983 to 9009 (TTETTSHSPPSFTSSISITETPSHSPP), 9052 to 9122 (AETT…TTGI), 9141 to 9160 (SHSTASFTSSITSTETISHS), 9215 to 9240 (FTSSITTTESTSQSTPSFTFSTTSTE), 9335 to 9366 (TSSITTTETPSHSSPSFPSSITSTETISHRTP), 9409 to 9465 (TETI…TTST), 9566 to 9589 (SHSTPSFTSSITTTKSTSHSNPSL), 9612 to 9674 (TTET…PPSF), 9734 to 9760 (TTSHGTPSLTSLIATTKSTPQNPSSFT), 9828 to 9859 (TSSITTTETTSHSTPRITSSITTTEKTSHSTP), 9883 to 9908 (TTTESTSHSNPSLTSAITNTETRSHS), 9921 to 9973 (TTSH…SKTI), 10076 to 10099 (SDSTPSFTSSVTTTETTSQSSPSF), 10120 to 10166 (ITTT…TVPS), 10189 to 10285 (ITTE…SPLS), 10389 to 10425 (TSSIATSETPSHSTPSFPSSITTTQSISHSTPSLSSA), 10462 to 10481 (TTKTTSHSPPSFTASITSTK), 10501 to 10537 (SHSSPSFTSSSTTTEIPSHSTPGFSSSIATSKTTSTS), 10640 to 10660 (TTSFPSSITTTETTSHSTPSF), 10750 to 10828 (TTTE…QRSP), 10887 to 11032 (TTET…SPSS), 11044 to 11065 (SHSTPSFTSSITSPETISHSTP), 11276 to 11317 (TGTE…SPSH), 11446 to 11482 (STTATPPDSTPSFTSSIATTENTSHSTPSFTSSITTT), 11566 to 11697 (TTET…PGFS), 11754 to 11779 (TKTTSHSTPDFTSSIASTKTTSHSTP), 11818 to 11949 (SIAT…HSPP), 12067 to 12103 (TSSFTSSITTTETTSQSTPSFTSSIAVTETPSDSTPV), 12186 to 12220 (PSYTSSIITTKTPSHSTPSFPSSITTTETISHSTP), 12280 to 12323 (TETT…STPI), 12364 to 12452 (TTET…TTET), 12468 to 12578 (EMTS…NTPS), 12616 to 12639 (FTTAETGVTSTPSSPSSLSTDIPT), 12681 to 12700 (SSPSIQSTETSSLVGTTSPT), 12785 to 12805 (IPSTHSSTLQTTPSIPSLQTS), 12985 to 13011 (TSSMTPESESSIIPNASSSTGTGTVPT), and 13052 to 13086 (SLPTILRTSSKSTHPSPPTARTSETSVATTQTPTT). Low complexity-rich tracts occupy residues 513–538 (SMTTTASGPTTTNTLSSLTSSILSST) and 547–559 (TSHTTTTTPPSTL). Residues 1620–1638 (TSTPPITSSVTPTNTVTSM) show a composition bias toward low complexity. A compositionally biased stretch (polar residues) spans 1944-1956 (TTSATMEPPSSSV). The segment covering 1957-1968 (AATDTGQTTFTS) has biased composition (low complexity). A compositionally biased stretch (polar residues) spans 2066-2091 (NASSMTTSETTYPNSPTGPVTNSMSK). Low complexity predominate over residues 2096-2107 (ASMTQTSSTATS). A compositionally biased stretch (polar residues) spans 2113–2123 (PSGSTTEIAKS). Residues 2170–2185 (STSMTPSTVSTSIPTS) are compositionally biased toward low complexity. The segment covering 2186 to 2195 (QPKTVNSSSG) has biased composition (polar residues). Low complexity-rich tracts occupy residues 2292–2308 (SSPPATTSTLHTTAEST) and 2442–2458 (RSTPTSETTYPTSPTST). Positions 2591–2603 (SAMSTSDIPSSPS) are enriched in low complexity. Low complexity-rich tracts occupy residues 2929–2944 (STDIPTSQPTTITPSS) and 3074–3097 (ETPSSTVATTGTGQTTFTSSTATS). Polar residues predominate over residues 3098 to 3109 (PETNTLTPTPDI). A compositionally biased stretch (low complexity) spans 3309-3359 (TTSHSTPSFTSPIATTKTSSHSSPSFTSSIATLETTSHSTPSFTSSITTNS). Residues 3360–3370 (HSTPRFSSSIA) show a composition bias toward polar residues. Residues 3371-3385 (TRETTSHSTSSFTPS) are compositionally biased toward low complexity. Over residues 3386–3395 (IATTKTNSNS) the composition is skewed to polar residues. The segment covering 3420–3452 (ITTTETTSHSTPSFTSSMATTKTTSHSTPSFTS) has biased composition (low complexity). The segment covering 3453–3462 (PIATRETTSH) has biased composition (polar residues). Positions 3463–3481 (STPSFTSLITTTKTTSHST) are enriched in low complexity. Residues 3740 to 3749 (ITTIETPSHG) show a composition bias toward polar residues. Low complexity predominate over residues 3750–3785 (TPSFTSSITSTETTSHSSPSFISSITTTEITSHSTP). Residues 3786-3812 (RFTSSITTMETPSHSTPNFTSSITTAE) are compositionally biased toward polar residues. Low complexity-rich tracts occupy residues 4020–4042 (STPSYTSAITTTETTSHRTPSFT) and 4067–4096 (TSNSTASLTSSMTTTETTSHSTPSLTSSMT). A compositionally biased stretch (polar residues) spans 4097–4106 (ATETTSHSTP). 2 stretches are compositionally biased toward low complexity: residues 4182–4228 (TTET…PSFT) and 4237–4249 (TSHSTPSFTSSIT). The segment covering 4557–4574 (TETTSNSSPSFTSSITNT) has biased composition (low complexity). Over residues 4575-4601 (KTTSYSPPGFTSSIPATETTSRSPPGF) the composition is skewed to polar residues. The span at 4602–4617 (TSSITTTETTSHSTSS) shows a compositional bias: low complexity. Residues 4802 to 4827 (TSSFTSSITSTETTSHSTPSLTSSIT) show a composition bias toward low complexity. The span at 5137–5158 (TPSHITPSFTSTITTSESTSHS) shows a compositional bias: low complexity. Polar residues predominate over residues 5159-5170 (NPSLTSAITTTE). Composition is skewed to low complexity over residues 5174–5203 (HSPPIFTSSITTTETTSHNTPSFTSSITTT) and 5458–5486 (TESTSRSTPSFTFSTTSTETTSHSTPSFT). The segment covering 5834–5858 (TTSYSTPSITSSITTTERTSHSTPS) has biased composition (low complexity). Polar residues predominate over residues 5859-5874 (YTSSIATRETPSHTVP). Over residues 5875–5889 (SFTSSITTTESTSHS) the composition is skewed to low complexity. Residues 5890–5901 (NPSLTSAITTTE) show a composition bias toward polar residues. Residues 6045–6059 (SFTSSITTTDSTSHS) show a composition bias toward low complexity. Over residues 6060–6071 (NPSLTSAITTTE) the composition is skewed to polar residues. A compositionally biased stretch (low complexity) spans 6172–6185 (TESTSHSTPSFTSS). Residues 6186–6197 (IATTETTSHTPP) are compositionally biased toward polar residues. A compositionally biased stretch (low complexity) spans 6456–6475 (TETPSHSTPSFPSSITTTQS). Over residues 6852 to 6867 (HNTLGLSSSVDTTKTT) the composition is skewed to polar residues. The segment covering 6946 to 6965 (ITTTETTSHSTPSITSSVTT) has biased composition (low complexity). Polar residues predominate over residues 6999–7018 (TTESTSHSNPSLTSAITTTE). The segment covering 7172-7206 (TASHSNPSSTSSITTTESTSHSPPRSTSAIATTGI) has biased composition (low complexity). Composition is skewed to low complexity over residues 7300–7329 (TSSITTTESTSQSTPSFTFSTTSTETTSHS) and 7400–7427 (SYTSSITTTETPSHSSPSFPSTITSTET). The segment covering 7476-7491 (TETISHSPPSFTSLTN) has biased composition (polar residues). The segment covering 7492-7532 (STETTSHSPPSFTSSSTTTETPSHSTPGFSSSIATSKTTST) has biased composition (low complexity). Composition is skewed to low complexity over residues 7734–7766 (TSHSPPSFTSSSTTTETPSHSTPGFSSSIATSK) and 7922–7944 (SHSTRSITSSITTTKRTSHSTPS). Residues 7945–7987 (YTSSIATSETPSHTVPSFTSLITTTDSTSHSNPSLTSAITTTE) are compositionally biased toward polar residues. Residues 8088 to 8101 (TESTSHSTPSFTSS) show a composition bias toward low complexity. Polar residues predominate over residues 8102–8113 (IATTETTSHTPP). Residues 8372–8391 (TETPSHSTPSFPSSITTTQS) show a composition bias toward low complexity. The segment covering 8768-8783 (HNTLGLSSSVDTTKTT) has biased composition (polar residues). Over residues 8862–8881 (ITTTETTSHSTPSITSSVTT) the composition is skewed to low complexity. The span at 8915-8934 (TTESTSHSNPSLTSAITTTE) shows a compositional bias: polar residues. Composition is skewed to low complexity over residues 9067–9081 (PTTETTSHSPPSFTS) and 9088–9122 (TASHSNPSSTSSITTTESTSHSPPRSTSAIATTGI). Low complexity predominate over residues 9335-9360 (TSSITTTETPSHSSPSFPSSITSTET). Over residues 9409-9424 (TETISHSPPSFTSLTN) the composition is skewed to polar residues. Composition is skewed to low complexity over residues 9425-9465 (STET…TTST), 9566-9585 (SHSTPSFTSSITTTKSTSHS), and 9612-9624 (TTETTSHRTPSFT). The segment covering 9625-9661 (SSIATAETTSHSPPSFTSLITTSETPSHSNPSFTSLI) has biased composition (polar residues). Residues 9662–9674 (TTTESTSHSPPSF) are compositionally biased toward low complexity. Composition is skewed to polar residues over residues 9892 to 9903 (NPSLTSAITNTE) and 9921 to 9933 (TTSHSPPSFTSLI). Over residues 9934–9973 (TSTETTSHSPPSFTSSSTTTETPSHSTPGFSSSIATSKTI) the composition is skewed to low complexity. Over residues 10120-10130 (ITTTETTSHST) the composition is skewed to low complexity. Residues 10131 to 10166 (PNITSSVTTTERTSHSTPSYTSSIATGETPSHTVPS) are compositionally biased toward polar residues. 2 stretches are compositionally biased toward low complexity: residues 10196–10271 (HSPP…SFTS) and 10394–10421 (TSETPSHSTPSFPSSITTTQSISHSTPS). Polar residues predominate over residues 10750-10791 (TTTETTSHSPPRFTSSITTTKTPSDSTPVFTPSIATSETSSH). Composition is skewed to low complexity over residues 10792 to 10828 (STPGYTSSTATTETMSHSTSSFTSSITTTETTSQRSP), 10887 to 10937 (TTET…SSIT), and 10950 to 11032 (PSSI…SPSS). Residues 11278–11291 (TETTSHSPPHFTSS) show a composition bias toward low complexity. Residues 11292–11317 (ITRTKTTSHRPPTFTSSITTTESPSH) are compositionally biased toward polar residues. Positions 11566-11682 (TTETTSHSIP…SHSTSGFTSS (117 aa)) are enriched in low complexity. 2 stretches are compositionally biased toward polar residues: residues 11683–11697 (NATTETTSHSTPGFS) and 11754–11769 (TKTTSHSTPDFTSSIA). 2 stretches are compositionally biased toward low complexity: residues 11770–11779 (STKTTSHSTP) and 11818–11880 (SIAT…SHST). Composition is skewed to polar residues over residues 11881 to 11896 (PSFTSSIATIETTSHS) and 11903 to 11912 (LIPTTKTTLH). 2 stretches are compositionally biased toward low complexity: residues 11913–11949 (SPPSFTSSITTTKTTSHSTSSLTSSMPTTKTTSHSPP) and 12067–12091 (TSSFTSSITTTETTSQSTPSFTSSI). Polar residues predominate over residues 12092–12103 (AVTETPSDSTPV). Residues 12280 to 12309 (TETTSHSAPNFSSSITSTETTSHSTPSFTS) show a composition bias toward low complexity. Over residues 12310-12323 (AITSTETTSHSTPI) the composition is skewed to polar residues. Residues 12364–12412 (TTETTSHSTPGFASSITTTKTTSHSTPSFTSSIATSNTTSSSTPGFTSS) show a composition bias toward low complexity. Polar residues predominate over residues 12413–12439 (IATTETTSRSTPGFTSSIVTTETTSPH). Over residues 12440 to 12452 (TPGFTSSITTTET) the composition is skewed to low complexity. Over residues 12468-12477 (EMTSHSTPSL) the composition is skewed to polar residues. Low complexity-rich tracts occupy residues 12478–12569 (TFSI…VTTP), 12624–12639 (TSTPSSPSSLSTDIPT), 12681–12692 (SSPSIQSTETSS), 12794–12805 (QTTPSIPSLQTS), 12990–13003 (PESESSIIPNASSS), and 13073–13086 (TSETSVATTQTPTT). Residues 13130–13163 (SGDRCQLQTRCQNGGQWDGLKCQCPSTFYGSSCE) form the EGF-like domain. 2 cysteine pairs are disulfide-bonded: Cys13134–Cys13140 and Cys13153–Cys13162. Residues 13172 to 13297 (DVVETEVGME…DSIKVNNNSK (126 aa)) enclose the SEA domain. The chain crosses the membrane as a helical span at residues 13381 to 13401 (LVGGLTAGAALLVLLLLALGV).

In terms of processing, highly O-glycosylated and probably also N-glycosylated. As to expression, fetal and adult small intestine and fetal and adult colon.

It is found in the membrane. In terms of biological role, major glycoprotein component of a variety of mucus gels. Thought to provide a protective, lubricating barrier against particles and infectious agents at mucosal surfaces. The protein is Mucin-3B of Homo sapiens (Human).